The sequence spans 296 residues: tRNA-cytidine(32) 2-sulfurtransferase (296 aa).

The PP-loop motif signature appears at 72-77; it reads SGGKDS. [4Fe-4S] cluster-binding residues include Cys-147, Cys-150, and Cys-238.

The protein belongs to the TtcA family. Homodimer. The cofactor is Mg(2+). It depends on [4Fe-4S] cluster as a cofactor.

The protein resides in the cytoplasm. The catalysed reaction is cytidine(32) in tRNA + S-sulfanyl-L-cysteinyl-[cysteine desulfurase] + AH2 + ATP = 2-thiocytidine(32) in tRNA + L-cysteinyl-[cysteine desulfurase] + A + AMP + diphosphate + H(+). Its pathway is tRNA modification. Functionally, catalyzes the ATP-dependent 2-thiolation of cytidine in position 32 of tRNA, to form 2-thiocytidine (s(2)C32). The sulfur atoms are provided by the cysteine/cysteine desulfurase (IscS) system. The chain is tRNA-cytidine(32) 2-sulfurtransferase from Sinorhizobium fredii (strain NBRC 101917 / NGR234).